The sequence spans 304 residues: Dihydroorotate dehydrogenase B (NAD(+)), catalytic subunit (304 aa).

Residues serine 22 and 46-47 contribute to the FMN site; that span reads KG. Substrate contacts are provided by residues lysine 46 and 70–74; that span reads NAIGL. FMN-binding residues include asparagine 100 and asparagine 128. Asparagine 128 is a substrate binding site. Cysteine 131 functions as the Nucleophile in the catalytic mechanism. The FMN site is built by lysine 166 and isoleucine 192. Position 193 to 194 (193 to 194) interacts with substrate; it reads NT. FMN-binding positions include glycine 218, 244 to 245, and 266 to 267; these read GG and GT.

It belongs to the dihydroorotate dehydrogenase family. Type 1 subfamily. As to quaternary structure, heterotetramer of 2 PyrK and 2 PyrD type B subunits. Requires FMN as cofactor.

It is found in the cytoplasm. The enzyme catalyses (S)-dihydroorotate + NAD(+) = orotate + NADH + H(+). It functions in the pathway pyrimidine metabolism; UMP biosynthesis via de novo pathway; orotate from (S)-dihydroorotate (NAD(+) route): step 1/1. Catalyzes the conversion of dihydroorotate to orotate with NAD(+) as electron acceptor. This is Dihydroorotate dehydrogenase B (NAD(+)), catalytic subunit (pyrD) from Pelobacter propionicus (strain DSM 2379 / NBRC 103807 / OttBd1).